The chain runs to 258 residues: UPF0246 protein ABO_1338 (258 aa).

Belongs to the UPF0246 family.

The chain is UPF0246 protein ABO_1338 from Alcanivorax borkumensis (strain ATCC 700651 / DSM 11573 / NCIMB 13689 / SK2).